A 168-amino-acid chain; its full sequence is Photosystem I assembly protein Ycf3 (168 aa).

3 TPR repeats span residues 35-68, 72-105, and 120-153; these read AFTY…EIDP, SYIL…NPFL, and GEQA…TPGN.

Belongs to the Ycf3 family.

It localises to the plastid. The protein localises to the chloroplast thylakoid membrane. Its function is as follows. Essential for the assembly of the photosystem I (PSI) complex. May act as a chaperone-like factor to guide the assembly of the PSI subunits. This chain is Photosystem I assembly protein Ycf3, found in Daucus carota (Wild carrot).